The chain runs to 441 residues: ATP-dependent protease ATPase subunit HslU (441 aa).

ATP contacts are provided by residues Ile-18, Gly-60 to Glu-65, Asp-254, Glu-319, and Arg-391.

This sequence belongs to the ClpX chaperone family. HslU subfamily. In terms of assembly, a double ring-shaped homohexamer of HslV is capped on each side by a ring-shaped HslU homohexamer. The assembly of the HslU/HslV complex is dependent on binding of ATP.

It localises to the cytoplasm. In terms of biological role, ATPase subunit of a proteasome-like degradation complex; this subunit has chaperone activity. The binding of ATP and its subsequent hydrolysis by HslU are essential for unfolding of protein substrates subsequently hydrolyzed by HslV. HslU recognizes the N-terminal part of its protein substrates and unfolds these before they are guided to HslV for hydrolysis. The polypeptide is ATP-dependent protease ATPase subunit HslU (Shewanella loihica (strain ATCC BAA-1088 / PV-4)).